The sequence spans 103 residues: c-Myc-binding protein (103 aa).

The protein belongs to the AMY1 family. In terms of assembly, binds via its C-terminal region to the N-terminal region of MYC. Associates with AKAP1/S-AKAP84. Interacts with MYCBPAP. Interacts with CFAP91.

It is found in the cytoplasm. The protein localises to the nucleus. Functionally, may control the transcriptional activity of MYC. Stimulates the activation of E box-dependent transcription by MYC. The protein is c-Myc-binding protein (MYCBP) of Bos taurus (Bovine).